The following is a 490-amino-acid chain: Bifunctional protein HldE (490 aa).

The segment at 1–330 (MERKEIESLF…AEIGHAHPDS (330 aa)) is ribokinase. ATP is bound at residue 205–208 (NRKE). Residue aspartate 275 is part of the active site. Positions 356–490 (FTNGCFDLLH…EKIRTGSIKE (135 aa)) are cytidylyltransferase.

The protein in the N-terminal section; belongs to the carbohydrate kinase PfkB family. In the C-terminal section; belongs to the cytidylyltransferase family. Homodimer.

The enzyme catalyses D-glycero-beta-D-manno-heptose 7-phosphate + ATP = D-glycero-beta-D-manno-heptose 1,7-bisphosphate + ADP + H(+). The catalysed reaction is D-glycero-beta-D-manno-heptose 1-phosphate + ATP + H(+) = ADP-D-glycero-beta-D-manno-heptose + diphosphate. Its pathway is nucleotide-sugar biosynthesis; ADP-L-glycero-beta-D-manno-heptose biosynthesis; ADP-L-glycero-beta-D-manno-heptose from D-glycero-beta-D-manno-heptose 7-phosphate: step 1/4. It functions in the pathway nucleotide-sugar biosynthesis; ADP-L-glycero-beta-D-manno-heptose biosynthesis; ADP-L-glycero-beta-D-manno-heptose from D-glycero-beta-D-manno-heptose 7-phosphate: step 3/4. Functionally, catalyzes the phosphorylation of D-glycero-D-manno-heptose 7-phosphate at the C-1 position to selectively form D-glycero-beta-D-manno-heptose-1,7-bisphosphate. Catalyzes the ADP transfer from ATP to D-glycero-beta-D-manno-heptose 1-phosphate, yielding ADP-D-glycero-beta-D-manno-heptose. This chain is Bifunctional protein HldE, found in Geotalea uraniireducens (strain Rf4) (Geobacter uraniireducens).